We begin with the raw amino-acid sequence, 110 residues long: Insulin (110 aa).

The first 24 residues, 1–24, serve as a signal peptide directing secretion; that stretch reads MAPWTRLLPLLALLSLWIPAPTRA. 3 disulfide bridges follow: cysteine 31/cysteine 96, cysteine 43/cysteine 109, and cysteine 95/cysteine 100. Positions 57–87 are cleaved as a propeptide — c peptide; it reads EAEDLQGKDAELGEAPGAGGLQPSALEAPLQ. The disordered stretch occupies residues 60 to 80; it reads DLQGKDAELGEAPGAGGLQPS.

This sequence belongs to the insulin family. As to quaternary structure, heterodimer of a B chain and an A chain linked by two disulfide bonds.

It is found in the secreted. Its function is as follows. Insulin decreases blood glucose concentration. It increases cell permeability to monosaccharides, amino acids and fatty acids. It accelerates glycolysis, the pentose phosphate cycle, and glycogen synthesis in liver. The polypeptide is Insulin (INS) (Felis catus (Cat)).